The sequence spans 156 residues: MPRRRVAAKREILDDPKYGSQILAKFMNHVMESGKKAVAERIVYGALDTVKARKNSDPLEIFEKALDAIAPLVEVKSRRVGGATYQVPVEVRPSRRNALAMRWLVDYARKRGEKSMALRLAGELLDAAEGKGAAVKKREDVHRMAEANKAFSHYRF.

The protein belongs to the universal ribosomal protein uS7 family. Part of the 30S ribosomal subunit. Contacts proteins S9 and S11.

In terms of biological role, one of the primary rRNA binding proteins, it binds directly to 16S rRNA where it nucleates assembly of the head domain of the 30S subunit. Is located at the subunit interface close to the decoding center, probably blocks exit of the E-site tRNA. The chain is Small ribosomal subunit protein uS7 from Pseudomonas entomophila (strain L48).